The following is a 542-amino-acid chain: Exopolysaccharide phosphotransferase CpsY (542 aa).

Residues 522 to 542 form a disordered region; it reads SPTVSAPLEDGQTANPAQTAR. Over residues 533 to 542 the composition is skewed to polar residues; the sequence is QTANPAQTAR.

This sequence belongs to the stealth family.

This Mycobacterium leprae (strain TN) protein is Exopolysaccharide phosphotransferase CpsY (cpsY).